A 196-amino-acid polypeptide reads, in one-letter code: Large ribosomal subunit protein uL11m (196 aa).

The protein belongs to the universal ribosomal protein uL11 family. Component of the mitochondrial ribosome large subunit (39S) which comprises a 16S rRNA and about 50 distinct proteins.

It localises to the mitochondrion. This is Large ribosomal subunit protein uL11m (mRpL11) from Drosophila melanogaster (Fruit fly).